An 869-amino-acid chain; its full sequence is Kinesin-like protein KIN-10A (869 aa).

Positions 1 to 36 are enriched in polar residues; sequence MAPTPSSSRSNQTQYTLIRTPQTKQRLNFHSKTPNP. Residues 1 to 50 form a disordered region; it reads MAPTPSSSRSNQTQYTLIRTPQTKQRLNFHSKTPNPDGSKDPSPPEHPVE. The segment covering 38-50 has biased composition (basic and acidic residues); sequence GSKDPSPPEHPVE. The region spanning 48–367 is the Kinesin motor domain; the sequence is PVEVIGRIRD…LEYGAKAKCI (320 aa). Residue 129–136 participates in ATP binding; it reads GPTGAGKS. Positions 393–515 form a coiled coil; that stretch reads RIAAMDEFII…EIEVEFRRSN (123 aa).

Belongs to the TRAFAC class myosin-kinesin ATPase superfamily. Kinesin family. KIN-10 subfamily. In terms of assembly, binds microtubules.

The protein resides in the cytoplasm. It localises to the cytoskeleton. The protein localises to the phragmoplast. Functionally, probable plus end-directed motor protein that may contribute to the transport of Golgi-derived vesicles in the phragmoplast. This is Kinesin-like protein KIN-10A from Arabidopsis thaliana (Mouse-ear cress).